We begin with the raw amino-acid sequence, 444 residues long: Chromosomal replication initiator protein DnaA (444 aa).

The segment at 1–66 is domain I, interacts with DnaA modulators; it reads MKSEIIESLK…SKTLRELFGK (66 aa). Residues 66-100 form a domain II region; that stretch reads KPMDFRIEHASAKTEEKLDSNEDEPLVKKRPLILT. A domain III, AAA+ region region spans residues 101–317; the sequence is PLNPILTFEN…GALVKLIMYQ (217 aa). 4 residues coordinate ATP: Gly144, Gly146, Lys147, and Thr148. The domain IV, binds dsDNA stretch occupies residues 318–444; the sequence is QISGEKVDLQ…VTGQILDQSV (127 aa).

The protein belongs to the DnaA family. As to quaternary structure, oligomerizes as a right-handed, spiral filament on DNA at oriC.

The protein resides in the cytoplasm. Plays an essential role in the initiation and regulation of chromosomal replication. ATP-DnaA binds to the origin of replication (oriC) to initiate formation of the DNA replication initiation complex once per cell cycle. Binds the DnaA box (a 9 base pair repeat at the origin) and separates the double-stranded (ds)DNA. Forms a right-handed helical filament on oriC DNA; dsDNA binds to the exterior of the filament while single-stranded (ss)DNA is stabiized in the filament's interior. The ATP-DnaA-oriC complex binds and stabilizes one strand of the AT-rich DNA unwinding element (DUE), permitting loading of DNA polymerase. After initiation quickly degrades to an ADP-DnaA complex that is not apt for DNA replication. Binds acidic phospholipids. This is Chromosomal replication initiator protein DnaA from Pseudothermotoga lettingae (strain ATCC BAA-301 / DSM 14385 / NBRC 107922 / TMO) (Thermotoga lettingae).